The sequence spans 1684 residues: MGAGSSTEQRSPEQPAESDTPSELELSGHGPAAEASGAAGDPADADPATKLPQKNGQLSAVNGVAEQEDVHVQEESQDGQEEEVTVEDVGQRESEDVKEKDRAKEMAASSTVVEDITKDEQEETPEIIEQIPASESNVEEMAQAAESQANDVGFKKVFKFVGFKFTVKKDKNEKSDTVQLLTVKKDEGEGAEASVGAGDHQEPGVETVGESASKESELKQSTEKQEGTLKQAQSSTEIPLQAESGQGTEEEAAKDGEENREKEPTKPLESPTSPVSNETTSSFKKFFTHGWAGWRKKTSFKKPKEDDLETSEKRKEQEAEKVDEEEGEKTEPAPAEEQEPAEGTDQARLSADYEKVELPLEDQVGDLEALSEKCAPLATEVFDEKTEAHQEVVAEVHVSTVEKMTKGQGGAEVEGDVVVEGSGESLPPEKLAETQEVPQEAEPVEELMKTKEVCVSGGDHTQLTDLSPEEKMLPKHPEGIVSEVEMLSSQERIKVQGSPLKKLFSSSGLKKLSGKKQKGKRGGGGGDEEPGEYQHIQTESPESADEQKGESSASSPEEPEEIACLEKGPSEAPQEAEAEEGATSDGEKKREGITPWASFKKMVTPKKRVRRPSESDKEEELDKVKSATLSSTESTASGMQDEVRAVGEEQRSEEPKRRVDTSVSWEALICVGSSKKRARKASSSDDEGGPRTLGGDGHRAEEASKDKEADALPASTQEQDQAHGSSSPEPAGSPSEGEGVSTWESFKRLVTPRKKSKSKLEERAEDSGAEQLASEIEPSREESWVSIKKFIPGRRKKRADGKQEQAAVEDSGPGEINEDDPDVPAVVPLSEYDAVEREKLEAQRAQENVELPQLKGAVYVSEELSKTLVHTVSVAVIDGTRAVTSAEERSPSWISASMTEPLEHAEGVATPPVGEVTEKDITAEATPALAQTLPGGKDAHDDIVTSEVDFTSEAVTAAETTEALRAEELTEASGAEETTDMVSAVSQLSDSPDTTEEATPVQEVEGGMLDTEEQERQTQAVLQAVADKVKEDSQVPATQTLQRAGPKALEKVEEVEEDSEVLATEKEKDVVPEGPVQEAETEHLAQGSETVQATPESLEVPEVTEDVDRATTCQVIKHQQLMEQAVAPESSETLTDSETNGSTPLADSDTPNGTQQDETVDSQDSNAIAAVKQSQVTEEEAAAAQTEGPSTPSSFPAQEEHREKPGRDVLEPTQALAAGAVPILAKAEVGQEGEAGQFDGEKVKDGQCVKELEVPVHTGPNSQKTADLTRDSEVMEVARCQETESNEEQSISPEKREMGTDVEKEETETKTEQASEEHEQETAAPEHEGTHPKPVLTADMPHSERGKALGSLEGSPSLPDQDKADCIEVQVQSSDTPVTQTTEAVKKVEETVATSEMDESLECAGAQSLPAEKLSETGGYGTLQHGEDTVPQGPESQAESIPIIVTPAPESILHSDLQREVSASQKQRSDEDNKPDAGPDAAGKESAAREKILRAEPEILELESKSNKIVQSVIQTAVDQFARTETAPETHASDLQNQVPVMQADSQGAQQMLDKDESDLQVSPQDGTLSAVAQEGLAVSDSSEGMSKASEMITTLAVESASVKESVEKLPLQCKDEKEHAADGPQHQSLAKAEADASGNLTKESPDTNGPKLTEEGDALKEEMNKAQTEEDDLQEPKGDLTES.

The disordered stretch occupies residues M1–T124. G2 is lipidated: N-myristoyl glycine. Phosphoserine occurs at positions 11, 18, 22, and 27. Low complexity predominate over residues G30–A48. Residues E75 to V86 are compositionally biased toward acidic residues. A compositionally biased stretch (basic and acidic residues) spans V89–E105. Residue S136 is modified to Phosphoserine. 2 disordered regions span residues S175 to S281 and K296 to Y353. Residues A212 to G227 are compositionally biased toward basic and acidic residues. Positions T228–G247 are enriched in polar residues. Phosphoserine is present on residues S234 and S244. The span at E251–K266 shows a compositional bias: basic and acidic residues. An involved in PKC-binding region spans residues A253–S543. S270 and S273 each carry phosphoserine. Residues S270–S281 show a composition bias toward polar residues. Residues K302 to E320 show a composition bias toward basic and acidic residues. Acidic residues predominate over residues K321 to E342. Position 330 is a phosphothreonine (T330). A Phosphoserine modification is found at S350. At Y353 the chain carries Phosphotyrosine. 2 positions are modified to phosphoserine: S371 and S467. Residues G421–G479 are disordered. The segment covering P468 to E478 has biased composition (basic and acidic residues). S489, S505, and S507 each carry phosphoserine. A disordered region spans residues R492–A825. The span at G497 to K511 shows a compositional bias: low complexity. Positions L512–R521 are enriched in basic residues. Residues S540, S543, S584, S598, S613, and S615 each carry the phosphoserine modification. The short motif at I593–S613 is the AKAP CaM-binding 1 element. Residues R611 to K625 are compositionally biased toward basic and acidic residues. The span at S626–S637 shows a compositional bias: low complexity. At T628 the chain carries Phosphothreonine. S630, S631, S634, and S637 each carry phosphoserine. The span at D641–D660 shows a compositional bias: basic and acidic residues. Phosphoserine occurs at positions 682, 683, and 684. Over residues D696–D710 the composition is skewed to basic and acidic residues. Over residues A714–H723 the composition is skewed to polar residues. The span at G724 to S741 shows a compositional bias: low complexity. Phosphoserine occurs at positions 733, 745, 767, and 786. The AKAP CaM-binding 2 motif lies at V740–L760. Residues E781–G801 carry the AKAP CaM-binding 3 motif. Phosphothreonine is present on T871. S873 carries the post-translational modification Phosphoserine. A disordered region spans residues T970–V1001. The span at D980–P992 shows a compositional bias: polar residues. K1030 participates in a covalent cross-link: Glycyl lysine isopeptide (Lys-Gly) (interchain with G-Cter in SUMO1). Disordered stretches follow at residues V1055–D1106, L1121–E1211, E1232–D1365, and T1391–I1492. S1059 carries the phosphoserine modification. Polar residues predominate over residues S1130–V1176. 2 stretches are compositionally biased toward basic and acidic residues: residues Q1198–L1210 and D1239–V1254. Residue S1292 is modified to Phosphoserine. Basic and acidic residues predominate over residues P1293–H1331. Phosphoserine occurs at positions 1351, 1355, and 1357. Residues Q1467–I1492 show a composition bias toward basic and acidic residues. Residues E1501–I1514 form an RII-binding region. 2 positions are modified to phosphoserine: S1546 and S1645. The segment at T1568–S1684 is disordered. The segment covering L1653–S1684 has biased composition (basic and acidic residues).

As to quaternary structure, binds to dimeric RII-alpha regulatory subunit of PKC. In terms of tissue distribution, isoform 1 is predominantly found in the nervous system. Isoform 3 is testis specific.

The protein resides in the cytoplasm. It is found in the cytoskeleton. It localises to the membrane. Functionally, anchoring protein that mediates the subcellular compartmentation of protein kinase A (PKA) and protein kinase C (PKC). The sequence is that of A-kinase anchor protein 12 (Akap12) from Mus musculus (Mouse).